Here is a 380-residue protein sequence, read N- to C-terminus: Tetratricopeptide repeat protein 19, mitochondrial (380 aa).

A mitochondrion-targeting transit peptide spans 1–70 (MFRLLSWSLG…AALAWFSRPA (70 aa)). TPR repeat units lie at residues 136-169 (TYTY…LLGG), 179-212 (IEIS…LEEK), 237-270 (GMCL…SEEI), 279-312 (IVLM…ARQI), and 318-351 (HMVL…AKLK).

Belongs to the TTC19 family. As to quaternary structure, binds to the mature mitochondrial complex III dimer, after the incorporation of the Rieske protein UQCRFS1. Interacts with UQCRC1 and UQCRFS1. Interacts with ZFYVE26 and CHMP4B. In terms of processing, proteolytically cleaved by PARL.

The protein resides in the mitochondrion inner membrane. Required for the preservation of the structural and functional integrity of mitochondrial respiratory complex III by allowing the physiological turnover of the Rieske protein UQCRFS1. Involved in the clearance of UQCRFS1 N-terminal fragments, which are produced upon incorporation of UQCRFS1 into the complex III and whose presence is detrimental for its catalytic activity. The sequence is that of Tetratricopeptide repeat protein 19, mitochondrial (TTC19) from Homo sapiens (Human).